The sequence spans 55 residues: Ferredoxin-1 (55 aa).

4Fe-4S ferredoxin-type domains follow at residues 2 to 27 (YKIE…EQGD) and 28 to 55 (TIFV…PVAE). The [4Fe-4S] cluster site is built by C8, C11, C14, C18, C37, C40, C43, and C47.

[4Fe-4S] cluster serves as cofactor.

Its function is as follows. Ferredoxins are iron-sulfur proteins that transfer electrons in a wide variety of metabolic reactions. The protein is Ferredoxin-1 of Rhodospirillum rubrum.